We begin with the raw amino-acid sequence, 633 residues long: MALLTRIRGPRDLDRLTPAQLAELAEEIRAFLVEEVSKTGGHLGPNLGVVELTLAMHRVFDSPRDRILFDTGHQSYVHKLLTGRQDFSRLKMKGGLSGYPSRAESEHDVIENSHASTVLGYADGLAKANKIQGHKDRPVVAVIGDGALTGGMAWEALNNIADSQDLPIVIVVNDNERSYSPTIGGLANHLATLRTTQGYERFLSWGKDALQRTPVVGQAMFDTLHGAKKGLKDFIAPQGMFEDLGLKYLGPIDGHDLQALESAFTKARNFGGPVIVHCITEKGRGYHAAENNDEDRFHAVGVIHPDTGLPVKTSGKDWTSVFGEEMVALGRERRDLVAITAAMLHPVGLAPFAKAYPERIFDVGIAEQHAAVCAAGLATNGLHPVVAVYATFLNRAFDQVLMDVALHKLGVTFVLDRAGVTGTDGASHNGMWDMSILQVVPGLRLAAPRDAEQVRLQLREAVEVADAPTVVRYSKGNVGPAVPAVGTVGGMDVLRRPEADSADEAADVLIVSIGAMAPTCLEAAELLAQQGISSTVVDPRWVKPVDAALPGLAAQHRLVVTVEDNGRAGGVGSAIAQALRDADVDVPLRDFGIPQEFLDHASRGEILDEIGLTAPAIAKKIEALVSTRSFARS.

Thiamine diphosphate is bound by residues His73 and 113 to 115 (SHA). Residue Asp145 coordinates Mg(2+). Residues 146–147 (GA), Asn175, Tyr286, and Glu367 contribute to the thiamine diphosphate site. Asn175 serves as a coordination point for Mg(2+).

It belongs to the transketolase family. DXPS subfamily. In terms of assembly, homodimer. The cofactor is Mg(2+). It depends on thiamine diphosphate as a cofactor.

The enzyme catalyses D-glyceraldehyde 3-phosphate + pyruvate + H(+) = 1-deoxy-D-xylulose 5-phosphate + CO2. Its pathway is metabolic intermediate biosynthesis; 1-deoxy-D-xylulose 5-phosphate biosynthesis; 1-deoxy-D-xylulose 5-phosphate from D-glyceraldehyde 3-phosphate and pyruvate: step 1/1. In terms of biological role, catalyzes the acyloin condensation reaction between C atoms 2 and 3 of pyruvate and glyceraldehyde 3-phosphate to yield 1-deoxy-D-xylulose-5-phosphate (DXP). The protein is 1-deoxy-D-xylulose-5-phosphate synthase 2 of Kitasatospora griseola (Streptomyces griseolosporeus).